The chain runs to 274 residues: Large ribosomal subunit protein uL2cz/uL2cy (274 aa).

Disordered stretches follow at residues 1 to 21 and 224 to 274; these read MAIH…VDSQ and NPVD…RRSK.

Belongs to the universal ribosomal protein uL2 family. In terms of assembly, part of the 50S ribosomal subunit.

The protein resides in the plastid. The protein localises to the chloroplast. The sequence is that of Large ribosomal subunit protein uL2cz/uL2cy (rpl2-A) from Gossypium hirsutum (Upland cotton).